We begin with the raw amino-acid sequence, 977 residues long: Kinesin-like protein KIN-14D (977 aa).

The span at 1–13 (MSSSNNAAAAAAS) shows a compositional bias: low complexity. The segment at 1 to 20 (MSSSNNAAAAAASPDPSRRR) is disordered. A Calponin-homology (CH) domain is found at 17 to 118 (SRRREDVVGW…CILALKDRFG (102 aa)). The stretch at 297–384 (KAEETQRIED…TKRRIELEEL (88 aa)) forms a coiled coil. The Kinesin motor domain occupies 472–800 (NIRVYCRIRP…LKFAERVSGV (329 aa)). 556 to 563 (GQTGSGKT) contacts ATP. Residues 812–847 (KEGKDVKELMDQLSLLKDTISKKDEEIDRLQLLNSS) are a coiled coil. The disordered stretch occupies residues 852 to 977 (PTRQADSVLK…RNNSTLKRGP (126 aa)). Polar residues-rich tracts occupy residues 861–879 (KHSS…TSVG) and 956–977 (RKSS…KRGP).

The protein belongs to the TRAFAC class myosin-kinesin ATPase superfamily. Kinesin family. KIN-14 subfamily.

The polypeptide is Kinesin-like protein KIN-14D (Oryza sativa subsp. japonica (Rice)).